A 387-amino-acid chain; its full sequence is ATP phosphoribosyltransferase regulatory subunit (387 aa).

It belongs to the class-II aminoacyl-tRNA synthetase family. HisZ subfamily. Heteromultimer composed of HisG and HisZ subunits.

The protein localises to the cytoplasm. The protein operates within amino-acid biosynthesis; L-histidine biosynthesis; L-histidine from 5-phospho-alpha-D-ribose 1-diphosphate: step 1/9. Functionally, required for the first step of histidine biosynthesis. May allow the feedback regulation of ATP phosphoribosyltransferase activity by histidine. In Polynucleobacter necessarius subsp. necessarius (strain STIR1), this protein is ATP phosphoribosyltransferase regulatory subunit.